The sequence spans 317 residues: MKETNFGEKTRVLVVGGTGSLGRRIVSACLAEGHETYVLQRPEIGVDIEKVQLLLSFKRLGAHLVEGSFSDHQSLVSAVKQVDVVVSAMSGVHFRTHNIPVQLKLVAAIKEAGNVKRFLPSEFGMDPSRMGHAMPPGSETFDQKMEIRNAIKAAGISHTYLVGACFAAYFGGNLSQMGTLFPPKNKVDIYGDGNVKVVFVDEDDMAKYTAKTLNDPRTLNKTVYVRPTDNILTQMELVQIWEKLTEKELEKTYVSGNDFLADIEDKEISHQAGLGHFYHIYYEGCLTDHEVGDDEEATKLYPDVKYKRMDEYLKIFV.

NADP(+) is bound by residues Thr-18, Ser-20, Leu-21, Arg-41, Lys-50, Ser-90, Gly-91, Arg-95, Asn-98, and Ser-121. Met-125 provides a ligand contact to (-)-pinoresinol. Lys-144 and Phe-166 together coordinate NADP(+). Catalysis depends on Lys-144, which acts as the Proton acceptor. Gly-178 lines the (-)-pinoresinol pocket.

It belongs to the NmrA-type oxidoreductase family. Isoflavone reductase subfamily. In terms of assembly, forms homodimers. Expressed in roots. Detected in stems.

It carries out the reaction (-)-lariciresinol + NADP(+) = (-)-pinoresinol + NADPH + H(+). Reductase involved in lignan biosynthesis. Unlike conventional pinoresinol reductases that can reduce both pinoresinol and lariciresinol, PRR2 shows a strict substrate selectivity for (-)-pinoresinol. No activity with (+)-pinoresinol or lariciresinol. Abstracts the 4R-hydride from the NADPH cofactor during catalysis. The chain is Pinoresinol reductase 2 from Arabidopsis thaliana (Mouse-ear cress).